The primary structure comprises 545 residues: Glucose-6-phosphate isomerase (545 aa).

Residue Glu-351 is the Proton donor of the active site. Catalysis depends on residues His-382 and Lys-510.

This sequence belongs to the GPI family.

The protein resides in the cytoplasm. The catalysed reaction is alpha-D-glucose 6-phosphate = beta-D-fructose 6-phosphate. The protein operates within carbohydrate biosynthesis; gluconeogenesis. It participates in carbohydrate degradation; glycolysis; D-glyceraldehyde 3-phosphate and glycerone phosphate from D-glucose: step 2/4. Catalyzes the reversible isomerization of glucose-6-phosphate to fructose-6-phosphate. This Shewanella loihica (strain ATCC BAA-1088 / PV-4) protein is Glucose-6-phosphate isomerase.